A 305-amino-acid chain; its full sequence is tRNA dimethylallyltransferase 1 (305 aa).

Position 10-17 (10-17 (GPTASGKT)) interacts with ATP. 12-17 (TASGKT) lines the substrate pocket. Residues 35 to 38 (DSRQ) are interaction with substrate tRNA.

The protein belongs to the IPP transferase family. As to quaternary structure, monomer. Requires Mg(2+) as cofactor.

The enzyme catalyses adenosine(37) in tRNA + dimethylallyl diphosphate = N(6)-dimethylallyladenosine(37) in tRNA + diphosphate. Its function is as follows. Catalyzes the transfer of a dimethylallyl group onto the adenine at position 37 in tRNAs that read codons beginning with uridine, leading to the formation of N6-(dimethylallyl)adenosine (i(6)A). This Syntrophus aciditrophicus (strain SB) protein is tRNA dimethylallyltransferase 1.